The sequence spans 235 residues: 2-C-methyl-D-erythritol 4-phosphate cytidylyltransferase (235 aa).

The protein belongs to the IspD/TarI cytidylyltransferase family. IspD subfamily.

It catalyses the reaction 2-C-methyl-D-erythritol 4-phosphate + CTP + H(+) = 4-CDP-2-C-methyl-D-erythritol + diphosphate. The protein operates within isoprenoid biosynthesis; isopentenyl diphosphate biosynthesis via DXP pathway; isopentenyl diphosphate from 1-deoxy-D-xylulose 5-phosphate: step 2/6. Functionally, catalyzes the formation of 4-diphosphocytidyl-2-C-methyl-D-erythritol from CTP and 2-C-methyl-D-erythritol 4-phosphate (MEP). The polypeptide is 2-C-methyl-D-erythritol 4-phosphate cytidylyltransferase (Mycolicibacterium paratuberculosis (strain ATCC BAA-968 / K-10) (Mycobacterium paratuberculosis)).